The following is a 526-amino-acid chain: Peptide chain release factor 3 (526 aa).

In terms of domain architecture, tr-type G spans 8 to 277; the sequence is NKRRTFAIIS…GLTEWAPKPQ (270 aa). GTP contacts are provided by residues 17–24, 85–89, and 139–142; these read SHPDAGKT, DTPGH, and NKLD.

It belongs to the TRAFAC class translation factor GTPase superfamily. Classic translation factor GTPase family. PrfC subfamily.

It localises to the cytoplasm. Functionally, increases the formation of ribosomal termination complexes and stimulates activities of RF-1 and RF-2. It binds guanine nucleotides and has strong preference for UGA stop codons. It may interact directly with the ribosome. The stimulation of RF-1 and RF-2 is significantly reduced by GTP and GDP, but not by GMP. In Actinobacillus pleuropneumoniae serotype 7 (strain AP76), this protein is Peptide chain release factor 3.